The primary structure comprises 426 residues: C4-dicarboxylate transport protein (426 aa).

The next 8 helical transmembrane spans lie at 4-24 (SIFTSLYLQVLVAITIGILLG), 44-64 (LIKMIIAPVIFCTVVTGIAGM), 76-96 (IALLYFEVVSTIALIIGLVVV), 142-162 (IGAFASGNILQVLLFAVMFGF), 184-204 (VIFGVINMIMKLAPIGAFGAM), 222-242 (LILCFYITCALFVVLVLGSIA), 326-346 (IWHQVTLLVVLLLSSKGAAGV), and 352-372 (IVLAATLSAVGHLPVAGLALI).

Belongs to the dicarboxylate/amino acid:cation symporter (DAACS) (TC 2.A.23) family.

It localises to the cell inner membrane. Its function is as follows. Responsible for the transport of dicarboxylates such as succinate, fumarate, and malate from the periplasm across the membrane. In Edwardsiella ictaluri (strain 93-146), this protein is C4-dicarboxylate transport protein.